Consider the following 1245-residue polypeptide: Structural polyprotein (1245 aa).

The tract at residues 1–106 is disordered; the sequence is MNRGFFNMLG…KTKPGKRQRM (106 aa). The host transcription inhibition stretch occupies residues 37–70; that stretch reads GLASQIQQLTTAVSALVIGQATRPQNPRPRPPPR. Polar residues predominate over residues 38–49; that stretch reads LASQIQQLTTAV. The Nuclear localization signal motif lies at 63-100; it reads PRPRPPPRQKKQAPKQPPKPKKPKPQEKKKKQPAKTKP. The segment covering 67–106 has biased composition (basic residues); that stretch reads PPPRQKKQAPKQPPKPKKPKPQEKKKKQPAKTKPGKRQRM. The tract at residues 86–115 is binding to the viral RNA; sequence KPQEKKKKQPAKTKPGKRQRMALKLEADRL. The tract at residues 100-114 is ribosome-binding; that stretch reads PGKRQRMALKLEADR. In terms of domain architecture, Peptidase S3 spans 114-264; sequence RLFDVKNEDG…KTTPEGTEEW (151 aa). Histidine 141 acts as the Charge relay system in catalysis. Residues 146-156 carry the Nuclear export signal motif; it reads IDHPVLSKLKF. The segment at 157 to 162 is interaction with spike glycoprotein E2; that stretch reads TKSSAY. Aspartate 163 acts as the Charge relay system in catalysis. The dimerization of the capsid protein stretch occupies residues 185 to 195; the sequence is PEGFYNWHHGA. Serine 215 serves as the catalytic Charge relay system. Positions 221-225 are dimerization of the capsid protein; the sequence is DNSGR. The interaction with spike glycoprotein E2 stretch occupies residues 249-253; the sequence is SKGKT. Residues 265-279 form a functions as an uncleaved signal peptide for the precursor of protein E3/E2 region; that stretch reads SAAPLVTAMCLLGNV. Asparagine 278 is a glycosylation site (N-linked (GlcNAc...) asparagine; by host). 4 disulfides stabilise this stretch: cysteine 283-cysteine 289, cysteine 480-cysteine 594, cysteine 529-cysteine 554, and cysteine 531-cysteine 548. The Extracellular segment spans residues 329 to 690; that stretch reads SVTDDFTLTS…HEIVQHYYHR (362 aa). N-linked (GlcNAc...) asparagine; by host glycosylation is present at asparagine 524. Asparagine 646 is a glycosylation site (N-linked (GlcNAc...) asparagine; by host). Residues 691–718 traverse the membrane as a helical segment; the sequence is HPVYTILAVASAAVAMMIGVTVAALCAC. The tract at residues 719–723 is interaction with the capsid protein; that stretch reads KARRE. Residues 719–751 lie on the Cytoplasmic side of the membrane; sequence KARRECLTPYALAPNAVIPTSLALLCCVRSANA. Residues cysteine 724, cysteine 744, and cysteine 745 are each lipidated (S-palmitoyl cysteine; by host). Cysteine 724 and cysteine 745 are oxidised to a cystine. Residues 752–763 are Extracellular-facing; sequence ETFTETMSYFWS. The chain crosses the membrane as a helical span at residues 764-784; sequence NSQPFFWVQLCIPLAAVIVLM. Position 785 (arginine 785) is a topological domain, cytoplasmic. A helical transmembrane segment spans residues 786 to 806; sequence CCSCCLPFLVVAGAYLAKVDA. Residues 807-1214 lie on the Extracellular side of the membrane; the sequence is YEHATTVPNV…QAAISKTSWS (408 aa). Cystine bridges form between cysteine 855–cysteine 920, cysteine 868–cysteine 900, cysteine 869–cysteine 902, and cysteine 874–cysteine 884. The interval 890 to 907 is E1 fusion peptide loop; that stretch reads VYPFMWGGAQCFCDSENS. N-linked (GlcNAc...) asparagine; by host glycans are attached at residues asparagine 945 and asparagine 1051. 4 cysteine pairs are disulfide-bonded: cysteine 1065–cysteine 1077, cysteine 1107–cysteine 1182, cysteine 1112–cysteine 1186, and cysteine 1134–cysteine 1176. A helical membrane pass occupies residues 1215–1239; that stretch reads WLFALFGGASSLLIIGLTIFACSMM. At 1240–1245 the chain is on the cytoplasmic side; sequence LTSTRR.

In terms of assembly, homodimer. Homomultimer. Interacts with host karyopherin KPNA4; this interaction allows the nuclear import of the viral capsid protein. Interacts with spike glycoprotein E2. Interacts with host IRAK1; the interaction leads to inhibition of IRAK1-dependent signaling. As to quaternary structure, the precursor of protein E3/E2 and E1 form a heterodimer shortly after synthesis. The precursor of protein E3/E2 and E1 form a heterodimer shortly after synthesis. Processing of the precursor of protein E3/E2 into E2 and E3 results in a heterodimer of the spike glycoproteins E2 and E1. Spike at virion surface are constituted of a trimer of E2-E1 heterodimers. After target cell attachment and endocytosis, E1 change conformation to form homotrimers. E2-E1 heterodimers interact with host VLDLR or LRP8/APOER2 to mediate viral entry. Interacts with 6K protein. In terms of assembly, processing of the precursor of protein E3/E2 into E2 and E3 results in a heterodimer of the spike glycoproteins E2 and E1. Spike at virion surface are constituted of a trimer of E2-E1 heterodimers. E2-E1 heterodimers interact with host VLDLR or LRP8/APOER2 to mediate viral entry. Interacts with 6K protein. Interacts with the capsid protein. As to quaternary structure, oligomer. Interacts with spike glycoprotein E1. Interacts with spike glycoprotein E2. Structural polyprotein: Specific enzymatic cleavages in vivo yield mature proteins. Capsid protein is auto-cleaved during polyprotein translation, unmasking a signal peptide at the N-terminus of the precursor of E3/E2. The remaining polyprotein is then targeted to the host endoplasmic reticulum, where host signal peptidase cleaves it into pE2, 6K and E1 proteins. pE2 is further processed to mature E3 and E2 by host furin in trans-Golgi vesicle. In terms of processing, palmitoylated via thioester bonds. These palmitoylations may induce disruption of the C-terminus transmembrane. This would result in the reorientation of E2 C-terminus from lumenal to cytoplasmic side. Post-translationally, N-glycosylated. Palmitoylated via thioester bonds.

The protein localises to the virion. It localises to the host cytoplasm. It is found in the host cell membrane. The protein resides in the host nucleus. Its subcellular location is the virion membrane. The protein localises to the host Golgi apparatus. It localises to the host trans-Golgi network. It is found in the host endoplasmic reticulum. The enzyme catalyses Autocatalytic release of the core protein from the N-terminus of the togavirus structural polyprotein by hydrolysis of a -Trp-|-Ser- bond.. In terms of biological role, forms an icosahedral capsid with a T=4 symmetry composed of 240 copies of the capsid protein surrounded by a lipid membrane through which penetrate 80 spikes composed of trimers of E1-E2 heterodimers. The capsid protein binds to the viral RNA genome at a site adjacent to a ribosome binding site for viral genome translation following genome release. Possesses a protease activity that results in its autocatalytic cleavage from the nascent structural protein. Following its self-cleavage, the capsid protein transiently associates with ribosomes, and within several minutes the protein binds to viral RNA and rapidly assembles into icosahedric core particles. The resulting nucleocapsid eventually associates with the cytoplasmic domain of the spike glycoprotein E2 at the cell membrane, leading to budding and formation of mature virions. In case of infection, new virions attach to target cells and after clathrin-mediated endocytosis their membrane fuses with the host endosomal membrane. This leads to the release of the nucleocapsid into the cytoplasm, followed by an uncoating event necessary for the genomic RNA to become accessible. The uncoating might be triggered by the interaction of capsid proteins with ribosomes. Binding of ribosomes would release the genomic RNA since the same region is genomic RNA-binding and ribosome-binding. Specifically inhibits interleukin-1 receptor-associated kinase 1/IRAK1-dependent signaling during viral entry, representing a means by which the alphaviruses may evade innate immune detection and activation prior to viral gene expression. Its function is as follows. Provides the signal sequence for the translocation of the precursor of protein E3/E2 to the host endoplasmic reticulum. Furin-cleaved E3 remains associated with spike glycoprotein E1 and mediates pH protection of the latter during the transport via the secretory pathway. After virion release from the host cell, the assembly protein E3 is gradually released in the extracellular space. Plays a role in viral attachment to target host cell, by binding to the cell receptors VLDLR or LRP8/APOER2. Synthesized as a pE2 precursor which is processed by furin at the cell membrane just before virion budding, giving rise to E2-E1 heterodimer. The pE2-E1 heterodimer is stable, whereas E2-E1 is unstable and dissociate at low pH. pE2 is processed at the last step, presumably to avoid E1 fusion activation before its final export to cell surface. E2 C-terminus contains a transitory transmembrane that would be disrupted by palmitoylation, resulting in reorientation of the C-terminal tail from lumenal to cytoplasmic side. This step is critical since E2 C-terminus is involved in budding by interacting with capsid proteins. This release of E2 C-terminus in cytoplasm occurs lately in protein export, and precludes premature assembly of particles at the endoplasmic reticulum membrane. Functionally, acts as a viroporin that participates in virus glycoprotein processing and transport to the plasma membrane, cell permeabilization and budding of viral particles. Disrupts the calcium homeostasis of the cell, probably at the endoplasmic reticulum level resulting in the increased levels of cytoplasmic calcium. Because of its lipophilic properties, the 6K protein is postulated to influence the selection of lipids that interact with the transmembrane domains of the glycoproteins, which, in turn, affects the deformability of the bilayer required for the extreme curvature that occurs as budding proceeds. Present in low amount in virions, about 3% compared to viral glycoproteins. In terms of biological role, class II viral fusion protein. Fusion activity is inactive as long as E1 is bound to E2 in mature virion. After virus attachment to target cell via host VLDLR or LRP8/APOER2 and endocytosis, acidification of the endosome induces dissociation of E1/E2 heterodimer and concomitant trimerization of the E1 subunits. This E1 trimer is fusion active, and promotes release of viral nucleocapsid in cytoplasm after endosome and viral membrane fusion. Efficient fusion requires the presence of cholesterol and sphingolipid in the target membrane. This is Structural polyprotein from Acrocephalus scirpaceus (Eurasian reed-warbler).